A 249-amino-acid polypeptide reads, in one-letter code: Triosephosphate isomerase (249 aa).

Asn-12 and Lys-14 together coordinate substrate. Residue Lys-14 is modified to N6-acetyllysine. Tyr-68 is modified (3'-nitrotyrosine). Position 80 is a phosphoserine (Ser-80). The active-site Electrophile is His-96. At Ser-106 the chain carries Phosphoserine. Lys-142 participates in a covalent cross-link: Glycyl lysine isopeptide (Lys-Gly) (interchain with G-Cter in SUMO1). Lys-149 is modified (N6-succinyllysine). Lys-156 carries the post-translational modification N6-acetyllysine; alternate. Lys-156 carries the N6-succinyllysine; alternate modification. Ser-159 is modified (phosphoserine). The active-site Proton acceptor is Glu-166. Thr-173 is modified (phosphothreonine). Lys-194 carries the N6-acetyllysine; alternate modification. The residue at position 194 (Lys-194) is an N6-succinyllysine; alternate. Residue Lys-194 is modified to N6-methyllysine; alternate. Ser-198 carries the phosphoserine modification. Position 209 is a 3'-nitrotyrosine (Tyr-209). The residue at position 212 (Ser-212) is a Phosphoserine. Thr-214 carries the phosphothreonine modification. Ser-223 is subject to Phosphoserine. An N6-acetyllysine modification is found at Lys-238.

The protein belongs to the triosephosphate isomerase family. As to quaternary structure, homodimer.

The protein localises to the cytoplasm. The catalysed reaction is dihydroxyacetone phosphate = methylglyoxal + phosphate. The enzyme catalyses D-glyceraldehyde 3-phosphate = dihydroxyacetone phosphate. The protein operates within carbohydrate degradation; glycolysis; D-glyceraldehyde 3-phosphate from glycerone phosphate: step 1/1. It functions in the pathway carbohydrate biosynthesis; gluconeogenesis. Its function is as follows. Triosephosphate isomerase is an extremely efficient metabolic enzyme that catalyzes the interconversion between dihydroxyacetone phosphate (DHAP) and D-glyceraldehyde-3-phosphate (G3P) in glycolysis and gluconeogenesis. In terms of biological role, it is also responsible for the non-negligible production of methylglyoxal a reactive cytotoxic side-product that modifies and can alter proteins, DNA and lipids. In Canis lupus familiaris (Dog), this protein is Triosephosphate isomerase (TPI1).